The chain runs to 365 residues: MVPSLITPPPSRSGEATPQKDACLNPVNIAEPEGHWIKLPEALFSSIMAVEPEVNPLYRTSKALSDEWLKTALRMNDKTAVIWSRLDIAYMSAICAPHADLETLKLMNDWNGWVFAFDDPFDEGTFANDPIKAAEEVIYTLATLDNIHPVVSPDENPLRHTLQSCWMRFRERSSPSLQYRWKKHLTMYCVGVLQQVGVQHRATRPTIEEYMDMRAGCVGAYPCIGLMEFAEGIDIPQNVMDHPSMQAISRITCDLVTLQNDLCSYRKDLIQGEESNIIFILKDQGMTDQQAVDQIGEMLYDCYRRWHMALANLPFWGEGIDRDVIKFVTGCRNIALGNLHWSLYTFRYLGNDGPEVKRTRMMKLP.

The span at 1-11 shows a compositional bias: pro residues; that stretch reads MVPSLITPPPS. The interval 1 to 20 is disordered; sequence MVPSLITPPPSRSGEATPQK. Residues Asp118, Asn260, and Ser264 each contribute to the Mg(2+) site. Residues 118 to 122 carry the D(D/E)XX(D/E) motif motif; the sequence is DDPFD. The short motif at 260-268 is the NSE motif element; the sequence is NDLCSYRKD. The short motif at 341-348 is the WxxxxxRY motif element; it reads WSLYTFRY. (2E,6E)-farnesyl diphosphate-binding residues include Arg347 and Tyr348.

The protein belongs to the terpene synthase family. As to quaternary structure, homodimer. Mg(2+) is required as a cofactor.

The catalysed reaction is (2E,6E)-farnesyl diphosphate + H2O = koraiol + diphosphate. It participates in sesquiterpene biosynthesis. Its function is as follows. Terpene cyclase that catalyzes the cyclization of farnesyl diphosphate (FPP) to the sesquiterpene koraiol. This Gibberella fujikuroi (strain CBS 195.34 / IMI 58289 / NRRL A-6831) (Bakanae and foot rot disease fungus) protein is Terpene cyclase 4.